We begin with the raw amino-acid sequence, 391 residues long: Decapping nuclease RAI1 (391 aa).

Glu174 serves as a coordination point for a divalent metal cation. Glu223 provides a ligand contact to substrate. A divalent metal cation contacts are provided by Asp225, Glu244, and Leu245. Substrate is bound by residues Lys246 and Gln270.

Belongs to the DXO/Dom3Z family. As to quaternary structure, interacts with RAT1; the interaction is direct, stabilizes RAT1 protein structure and stimulates its exoribonuclease activity. The interaction also stimulates RAI1 pyrophosphohydrolase activity, probably by recruiting it to mRNA substrates. Requires a divalent metal cation as cofactor.

Its subcellular location is the nucleus. It catalyses the reaction a 5'-end NAD(+)-phospho-ribonucleoside in mRNA + H2O = a 5'-end phospho-ribonucleoside in mRNA + NAD(+) + H(+). It carries out the reaction a 5'-end (N(7)-methyl 5'-triphosphoguanosine)-ribonucleoside-ribonucleotide in mRNA + H2O = a (N(7)-methyl 5'-triphosphoguanosine)-nucleoside + a 5'-end phospho-ribonucleoside in mRNA + H(+). The enzyme catalyses a 5'-end triphospho-ribonucleoside in mRNA + H2O = a 5'-end phospho-ribonucleoside in mRNA + diphosphate + H(+). Its function is as follows. Decapping enzyme for NAD-capped RNAs: specifically hydrolyzes the nicotinamide adenine dinucleotide (NAD) cap from a subset of RNAs by removing the entire NAD moiety from the 5'-end of an NAD-capped RNA. The NAD-cap is present at the 5'-end of some RNAs and snoRNAs. In contrast to the canonical 5'-end N7 methylguanosine (m7G) cap, the NAD cap promotes mRNA decay. Also acts as a non-canonical decapping enzyme that removes the entire cap structure of m7G capped or incompletely capped RNAs. Has decapping activity toward incomplete 5'-end m7G cap mRNAs such as unmethylated 5'-end-capped RNA (cap0), while it has no activity toward 2'-O-ribose methylated m7G cap (cap1). Also possesses RNA 5'-pyrophosphohydrolase activity by hydrolyzing the 5'-end triphosphate to release pyrophosphates. Stimulates exoribonuclease activity of Rat1, allowing it to degrade RNAs with stable secondary structure more effectively. This is Decapping nuclease RAI1 from Candida albicans (strain SC5314 / ATCC MYA-2876) (Yeast).